Reading from the N-terminus, the 354-residue chain is Mycothiol acetyltransferase (354 aa).

Over residues 1–18 the composition is skewed to polar residues; sequence MMVDNQTPDSSTLSTAST. The segment at 1–21 is disordered; sequence MMVDNQTPDSSTLSTASTPVY. N-acetyltransferase domains follow at residues 21–176 and 191–354; these read YAEP…QTRE and LRMR…EPAA. Residue glutamate 52 participates in 1D-myo-inositol 2-(L-cysteinylamino)-2-deoxy-alpha-D-glucopyranoside binding. 101–103 contributes to the acetyl-CoA binding site; that stretch reads AAV. Positions 217, 259, and 274 each coordinate 1D-myo-inositol 2-(L-cysteinylamino)-2-deoxy-alpha-D-glucopyranoside. Residues 278-280 and 285-291 contribute to the acetyl-CoA site; these read VGV and QGGGLGR. Tyrosine 318 contributes to the 1D-myo-inositol 2-(L-cysteinylamino)-2-deoxy-alpha-D-glucopyranoside binding site.

Belongs to the acetyltransferase family. MshD subfamily. As to quaternary structure, monomer.

The enzyme catalyses 1D-myo-inositol 2-(L-cysteinylamino)-2-deoxy-alpha-D-glucopyranoside + acetyl-CoA = mycothiol + CoA + H(+). Its function is as follows. Catalyzes the transfer of acetyl from acetyl-CoA to desacetylmycothiol (Cys-GlcN-Ins) to form mycothiol. This is Mycothiol acetyltransferase from Rothia mucilaginosa (strain DY-18) (Stomatococcus mucilaginosus).